The following is a 1868-amino-acid chain: Protein TIC 214 (1868 aa).

6 consecutive transmembrane segments (helical) span residues 11 to 31 (LLLL…YYGF), 64 to 84 (FIMG…HLAL), 87 to 107 (PHTL…FFWN), 126 to 146 (LSIQ…HFIL), 166 to 186 (ILFV…LMKS), and 221 to 241 (IFSI…PSPI). Residues 248 to 276 (ESSKGEEKKKTEKERDVEMETISKTKKIE) show a composition bias toward basic and acidic residues. 5 disordered regions span residues 248–277 (ESSK…KIEQ), 617–643 (FDFE…GIRS), 658–700 (DEDT…QAEE), 782–806 (TSDY…KRKE), and 1537–1607 (YIDP…RKKK). Positions 617 to 636 (FDFEEEEEEEEEEDDEEEPT) are enriched in acidic residues. The segment covering 674–683 (AKNSDQAKNS) has biased composition (polar residues). Basic and acidic residues-rich tracts occupy residues 684-700 (DQAK…QAEE), 789-806 (GAKE…KRKE), and 1537-1576 (YIDP…ERQH).

The protein belongs to the TIC214 family. Part of the Tic complex.

Its subcellular location is the plastid. It localises to the chloroplast inner membrane. Involved in protein precursor import into chloroplasts. May be part of an intermediate translocation complex acting as a protein-conducting channel at the inner envelope. This chain is Protein TIC 214, found in Nuphar advena (Common spatterdock).